Here is a 412-residue protein sequence, read N- to C-terminus: Dihydrolipoyllysine-residue acetyltransferase component of pyruvate dehydrogenase complex (412 aa).

Residues 2-78 form the Lipoyl-binding domain; sequence PIKILMPVLS…PVNSLIAVLS (77 aa). N6-lipoyllysine is present on Lys43. One can recognise a Peripheral subunit-binding (PSBD) domain in the interval 132–169; sequence FASPLAKRLAKMGNIRLESVKGSGPHGRIVKQDILSYT. The active site involves His385.

The protein belongs to the 2-oxoacid dehydrogenase family. In terms of assembly, forms a 24-polypeptide structural core with octahedral symmetry. Requires (R)-lipoate as cofactor.

It carries out the reaction N(6)-[(R)-dihydrolipoyl]-L-lysyl-[protein] + acetyl-CoA = N(6)-[(R)-S(8)-acetyldihydrolipoyl]-L-lysyl-[protein] + CoA. Its function is as follows. The pyruvate dehydrogenase complex catalyzes the overall conversion of pyruvate to acetyl-CoA and CO(2). It contains multiple copies of three enzymatic components: pyruvate dehydrogenase (E1), dihydrolipoamide acetyltransferase (E2) and lipoamide dehydrogenase (E3). This chain is Dihydrolipoyllysine-residue acetyltransferase component of pyruvate dehydrogenase complex (pdhC), found in Rickettsia felis (strain ATCC VR-1525 / URRWXCal2) (Rickettsia azadi).